Reading from the N-terminus, the 161-residue chain is Sec-independent protein translocase protein TatB (161 aa).

Residues 2-22 traverse the membrane as a helical segment; it reads FNDIGALELVTLVVLAVLVFG. Positions 102–161 are disordered; it reads DAVHGRDAESSSSGSSSGSSSAASGNGRVDMSKKPEKPEKPGKTDKPAADDRPPFDMDAT. The span at 111 to 126 shows a compositional bias: low complexity; sequence SSSSGSSSGSSSAASG. Positions 131–161 are enriched in basic and acidic residues; the sequence is DMSKKPEKPEKPGKTDKPAADDRPPFDMDAT.

Belongs to the TatB family. In terms of assembly, the Tat system comprises two distinct complexes: a TatABC complex, containing multiple copies of TatA, TatB and TatC subunits, and a separate TatA complex, containing only TatA subunits. Substrates initially bind to the TatABC complex, which probably triggers association of the separate TatA complex to form the active translocon.

The protein resides in the cell membrane. Part of the twin-arginine translocation (Tat) system that transports large folded proteins containing a characteristic twin-arginine motif in their signal peptide across membranes. Together with TatC, TatB is part of a receptor directly interacting with Tat signal peptides. TatB may form an oligomeric binding site that transiently accommodates folded Tat precursor proteins before their translocation. The protein is Sec-independent protein translocase protein TatB of Streptomyces coelicolor (strain ATCC BAA-471 / A3(2) / M145).